The following is a 270-amino-acid chain: Large ribosomal subunit protein uL10 (270 aa).

The interval valine 234–aspartate 270 is disordered. The segment covering glutamate 238–arginine 250 has biased composition (basic and acidic residues). The segment covering aspartate 257–aspartate 270 has biased composition (acidic residues).

Belongs to the universal ribosomal protein uL10 family. Associates with the pre-60S ribosomal particle.

It is found in the nucleus. It localises to the nucleolus. The protein localises to the cytoplasm. Functionally, component of the ribosome assembly machinery. Nuclear paralog of the ribosomal protein P0, it binds pre-60S subunits at an early stage of assembly in the nucleolus, and is replaced by P0 in cytoplasmic pre-60S subunits and mature 80S ribosomes. The sequence is that of Large ribosomal subunit protein uL10 from Chaetomium thermophilum (strain DSM 1495 / CBS 144.50 / IMI 039719) (Thermochaetoides thermophila).